The following is a 64-amino-acid chain: Photosystem II reaction center protein J (64 aa).

The helical transmembrane segment at 35–55 threads the bilayer; that stretch reads LWLVATAGGIAVIFVLGIFFY.

This sequence belongs to the PsbJ family. In terms of assembly, PSII is composed of 1 copy each of membrane proteins PsbA, PsbB, PsbC, PsbD, PsbE, PsbF, PsbH, PsbI, PsbJ, PsbK, PsbL, PsbM, PsbT, PsbX, PsbY, Psb30/Ycf12, peripheral proteins PsbO, CyanoQ (PsbQ), PsbU, PsbV and a large number of cofactors. It forms dimeric complexes.

It is found in the cellular thylakoid membrane. Functionally, one of the components of the core complex of photosystem II (PSII). PSII is a light-driven water:plastoquinone oxidoreductase that uses light energy to abstract electrons from H(2)O, generating O(2) and a proton gradient subsequently used for ATP formation. It consists of a core antenna complex that captures photons, and an electron transfer chain that converts photonic excitation into a charge separation. The protein is Photosystem II reaction center protein J of Prochlorococcus marinus (strain MIT 9515).